The chain runs to 398 residues: Glucose-1-phosphate adenylyltransferase (398 aa).

Alpha-D-glucose 1-phosphate-binding positions include Tyr-100, Gly-165, 180–181, and Ser-191; that span reads EK.

Belongs to the bacterial/plant glucose-1-phosphate adenylyltransferase family. In terms of assembly, homotetramer.

It catalyses the reaction alpha-D-glucose 1-phosphate + ATP + H(+) = ADP-alpha-D-glucose + diphosphate. Its pathway is glycan biosynthesis; glycogen biosynthesis. In terms of biological role, involved in the biosynthesis of ADP-glucose, a building block required for the elongation reactions to produce glycogen. Catalyzes the reaction between ATP and alpha-D-glucose 1-phosphate (G1P) to produce pyrophosphate and ADP-Glc. This is Glucose-1-phosphate adenylyltransferase from Desulfitobacterium hafniense (strain Y51).